Consider the following 185-residue polypeptide: Large ribosomal subunit protein uL16m (185 aa).

The protein belongs to the universal ribosomal protein uL16 family.

Its subcellular location is the mitochondrion. The polypeptide is Large ribosomal subunit protein uL16m (RPL16) (Zea mays (Maize)).